The chain runs to 270 residues: Urease accessory protein UreD (270 aa).

Belongs to the UreD family. As to quaternary structure, ureD, UreF and UreG form a complex that acts as a GTP-hydrolysis-dependent molecular chaperone, activating the urease apoprotein by helping to assemble the nickel containing metallocenter of UreC. The complex may form in the order UreABCD, UreABCDF, UreABCDFG. The UreE protein probably delivers the nickel in a GTPase-dependent fashion.

Its subcellular location is the cytoplasm. Functionally, necessary for the functional incorporation of the urease nickel metallocenter. This is Urease accessory protein UreD from Klebsiella aerogenes (Enterobacter aerogenes).